The chain runs to 260 residues: Oxidoreductase macE (260 aa).

The protein belongs to the oxidoreductase OpS7 family.

It participates in secondary metabolite biosynthesis; terpenoid biosynthesis. Its function is as follows. Oxidoreductase; part of the gene cluster that mediates the biosynthesis of macrophorins, isoprenoid epoxycyclohexenones containing cyclized drimane moieties. The first step of the pathway is the synthesis of 6-methylsalicylic acid (6-MSA) by the polyketide synthase macA. 6-MSA is then converted to m-cresol by the decarboxylase macB. The cytochrome P450 monooxygenase macC then catalyzes the oxidation of m-cresol to toluquinol. Epoxidation of toluquinol is then performed by the short chain dehydrogenase macD, with the help of macE, and a further prenylation by macG leads to 7-deacetoxyyanuthone A. The next step is the hydroxylation of C-22 of 7-deacetoxyyanuthone A by the cytochrome P450 monooxygenase macH to yield 22-deacetylyanuthone A. O-Mevalon transferase macI then attaches mevalon to the hydroxyl group of 22-deacetylyanuthone A to produce yanuthone E. The terpene cyclase macJ catalyzes the cyclization of 22-deacetylyanuthone A to macrophorin A. MacJ is also able to catalyze cyclization of yanuthone E and 7-deacetoxyyanuthone A to their corresponding macrophorins. The macJ products can be further modified by macH and macJ, as well as by the FAD-dependent monooxygenase macF, to produce additional macrophorins, including 4'-oxomacrophorin A, 4'-oxomacrophorin D and 4'-oxomacrophorin E. This chain is Oxidoreductase macE, found in Penicillium terrestre.